The primary structure comprises 471 residues: Glutamate--tRNA ligase (471 aa).

The 'HIGH' region motif lies at 9–19 (PSPTGYLHVGG). Positions 98, 100, 125, and 127 each coordinate Zn(2+). A 'KMSKS' region motif is present at residues 237-241 (KLSKR). Residue K240 coordinates ATP.

It belongs to the class-I aminoacyl-tRNA synthetase family. Glutamate--tRNA ligase type 1 subfamily. In terms of assembly, monomer. The cofactor is Zn(2+).

It localises to the cytoplasm. The enzyme catalyses tRNA(Glu) + L-glutamate + ATP = L-glutamyl-tRNA(Glu) + AMP + diphosphate. Its function is as follows. Catalyzes the attachment of glutamate to tRNA(Glu) in a two-step reaction: glutamate is first activated by ATP to form Glu-AMP and then transferred to the acceptor end of tRNA(Glu). This is Glutamate--tRNA ligase from Shigella dysenteriae serotype 1 (strain Sd197).